A 312-amino-acid chain; its full sequence is Aspartoacylase (312 aa).

Zn(2+) is bound by residues His-20 and Glu-23. 3 residues coordinate N-acetyl-L-aspartate: Arg-62, Asn-69, and Arg-70. Zn(2+) is bound at residue His-115. 2 residues coordinate N-acetyl-L-aspartate: Tyr-163 and Arg-167. The active-site Proton donor/acceptor is Glu-177. An N-acetyl-L-aspartate-binding site is contributed by Tyr-287.

It belongs to the AspA/AstE family. Aspartoacylase subfamily. In terms of assembly, homodimer. Zn(2+) is required as a cofactor. Detected in kidney proximal tubule cells (at protein level).

The protein resides in the cytoplasm. The protein localises to the nucleus. The enzyme catalyses an N-acyl-L-aspartate + H2O = a carboxylate + L-aspartate. It catalyses the reaction N-acetyl-L-aspartate + H2O = L-aspartate + acetate. Its function is as follows. Catalyzes the deacetylation of N-acetylaspartic acid (NAA) to produce acetate and L-aspartate. NAA occurs in high concentration in brain and its hydrolysis NAA plays a significant part in the maintenance of intact white matter. In other tissues it acts as a scavenger of NAA from body fluids. The chain is Aspartoacylase from Rattus norvegicus (Rat).